The sequence spans 426 residues: ATP-dependent Clp protease ATP-binding subunit ClpX (426 aa).

One can recognise a ClpX-type ZB domain in the interval 1 to 52 (MNEIKKRCSFCNKEESLDNPIINSGITPDVYICNYCLIVGSEILTGYLNKNP). Positions 8, 11, 33, and 36 each coordinate Zn(2+). 129 to 136 (PTGSGKTL) serves as a coordination point for ATP.

The protein belongs to the ClpX chaperone family. In terms of assembly, component of the ClpX-ClpP complex. Forms a hexameric ring that, in the presence of ATP, binds to fourteen ClpP subunits assembled into a disk-like structure with a central cavity, resembling the structure of eukaryotic proteasomes.

Its function is as follows. ATP-dependent specificity component of the Clp protease. It directs the protease to specific substrates. Can perform chaperone functions in the absence of ClpP. This chain is ATP-dependent Clp protease ATP-binding subunit ClpX, found in Helicobacter hepaticus (strain ATCC 51449 / 3B1).